The primary structure comprises 173 residues: Translation initiation factor IF-3 (173 aa).

The protein belongs to the IF-3 family. As to quaternary structure, monomer.

The protein localises to the cytoplasm. Its function is as follows. IF-3 binds to the 30S ribosomal subunit and shifts the equilibrium between 70S ribosomes and their 50S and 30S subunits in favor of the free subunits, thus enhancing the availability of 30S subunits on which protein synthesis initiation begins. This chain is Translation initiation factor IF-3, found in Clostridium tetani (strain Massachusetts / E88).